Reading from the N-terminus, the 430-residue chain is T-kininogen 2 (430 aa).

Positions 1 to 18 are cleaved as a signal peptide; it reads MKLITILLLCSRLLPSLA. Pyrrolidone carboxylic acid is present on Gln19. The 104-residue stretch at 28–131 folds into the Cystatin kininogen-type 1 domain; the sequence is CNDETVFQAV…TQICNITPGK (104 aa). Cystine bridges form between Cys28–Cys404, Cys83–Cys94, Cys107–Cys125, Cys141–Cys144, Cys205–Cys217, Cys228–Cys247, Cys263–Cys266, Cys327–Cys339, and Cys350–Cys369. Asn82 is a glycosylation site (N-linked (GlcNAc...) asparagine). The Cystatin kininogen-type 2 domain occupies 150-253; it reads MDSSDLKPVL…SQSCDLYPGD (104 aa). N-linked (GlcNAc...) asparagine glycosylation is found at Asn168 and Asn204. The Cystatin kininogen-type 3 domain occupies 272–375; that stretch reads VDSPELKEAL…TVRCQALDMM (104 aa). A glycan (N-linked (GlcNAc...) asparagine) is linked at Asn326. A disordered region spans residues 410 to 430; the sequence is LSKAGAGPAPDHQAEASTVTP.

Post-translationally, as T-kinin is preceded by a Met instead of an Arg or Lys, it is not released from its precursor by either tissue or plasma kallikrein. As to expression, plasma.

Its subcellular location is the secreted. It is found in the extracellular space. Functionally, kininogens are plasma glycoproteins with a number of functions: (1) as precursor of the active peptide bradykinin they effect smooth muscle contraction, induction of hypotension and increase of vascular permeability. (2) They play a role in blood coagulation by helping to position optimally prekallikrein and factor XI next to factor XII. (3) They are inhibitor of thiol proteases. This is T-kininogen 2 from Rattus norvegicus (Rat).